The following is a 99-amino-acid chain: U8-agatoxin-Ao1a (99 aa).

The N-terminal stretch at 1–19 is a signal peptide; it reads MKSLLFVTIAVYFVAQAVT. Residues 20-45 constitute a propeptide that is removed on maturation; it reads ANLLSNFLGSSLIDDDKGNMHKLYKR.

This sequence belongs to the neurotoxin 02 (plectoxin) family. Contains 5 disulfide bonds. Expressed by the venom gland.

It localises to the secreted. This Agelena orientalis (Funnel-web spider) protein is U8-agatoxin-Ao1a.